We begin with the raw amino-acid sequence, 61 residues long: Sperm protamine P1 (61 aa).

Residues 1-61 are disordered; that stretch reads MARYRHSRSR…RRYHSHRRRY (61 aa).

Belongs to the protamine P1 family. Testis.

The protein localises to the nucleus. Its subcellular location is the chromosome. Its function is as follows. Protamines substitute for histones in the chromatin of sperm during the haploid phase of spermatogenesis. They compact sperm DNA into a highly condensed, stable and inactive complex. This Notoryctes typhlops (Southern marsupial mole) protein is Sperm protamine P1 (PRM1).